The primary structure comprises 809 residues: Interleukin-4 receptor subunit alpha (809 aa).

A signal peptide spans 1–25 (MGCLCPGLTLPVSCLILVWAAGSGS). The Extracellular portion of the chain corresponds to 26-231 (VKVLRLTACF…NYYEQPLEQR (206 aa)). Cys-34 and Cys-44 are disulfide-bonded. Residues Asn-53 and Asn-71 are each glycosylated (N-linked (GlcNAc...) asparagine). Residues Cys-74 and Cys-86 are joined by a disulfide bond. Residues Asn-112, Asn-128, and Asn-161 are each glycosylated (N-linked (GlcNAc...) asparagine). In terms of domain architecture, Fibronectin type-III spans 125–222 (APQNLTVHAI…EWSPSTTWHN (98 aa)). Ser-163 carries the post-translational modification Phosphoserine. N-linked (GlcNAc...) asparagine glycosylation is found at Asn-175 and Asn-208. The WSXWS motif signature appears at 211-215 (WSEWS). Residues 232-255 (LPLGVSISCVVILAICLSCYFSII) form a helical membrane-spanning segment. Residues 256 to 809 (KIKKEWWDQI…STGPTCTSAS (554 aa)) are Cytoplasmic-facing. Positions 261–269 (WWDQIPNPA) match the Box 1 motif motif. 2 disordered regions span residues 369 to 397 (ESEE…QEGR) and 441 to 468 (SAGP…TLTQ). Residues 447–468 (AASQGEEQPLNPESNPLATLTQ) show a composition bias toward polar residues. Tyr-488 is subject to Phosphotyrosine. The segment at 514–536 (LGQVDPSIPSAPQPSEPPTALQP) is disordered. Phosphotyrosine is present on residues Tyr-566, Tyr-590, and Tyr-618. Residues 606–674 (QSGVEASSGE…EPTVKGEDPR (69 aa)) are disordered. Positions 695–700 (IVYSAL) match the ITIM motif motif.

The protein belongs to the type I cytokine receptor family. Type 4 subfamily. The functional IL4 receptor is formed by initial binding of IL4 to IL4R. Subsequent recruitment to the complex of the common gamma chain, in immune cells, creates a type I receptor and, in non-immune cells, of IL13RA1 forms a type II receptor. IL4R can also interact with the IL13/IL13RA1 complex to form a similar type II receptor. Interacts with PIK3C3. Interacts with the SH2-containing phosphatases, PTPN6/SHIP1, PTPN11/SHIP2 and INPP5D/SHIP. Interacts with JAK1 through a Box 1-containing region; inhibited by SOCS5. Interacts with SOCS5; inhibits IL4 signaling. Interacts with JAK3. Interacts with CLM1. Interacts with IL13RA2. In terms of processing, on IL4 binding, phosphorylated on tyrosine residues in the cytoplasmic domain.

It is found in the cell membrane. The protein localises to the secreted. Functionally, receptor for both interleukin 4 and interleukin 13. Couples to the JAK1/2/3-STAT6 pathway. The IL4 response is involved in promoting Th2 differentiation. The IL4/IL13 responses are involved in regulating IgE production and, chemokine and mucus production at sites of allergic inflammation. In certain cell types, can signal through activation of insulin receptor substrates, IRS1/IRS2. The chain is Interleukin-4 receptor subunit alpha (IL4R) from Equus caballus (Horse).